We begin with the raw amino-acid sequence, 419 residues long: DNA polymerase IV (419 aa).

The 182-residue stretch at 12 to 193 folds into the UmuC domain; it reads IFHIDMNCFY…MSVEEMYGIG (182 aa). Residues Asp16 and Asp112 each contribute to the Mg(2+) site. Glu113 is an active-site residue. A disordered region spans residues 388-419; it reads IITSQKNKNESQENQQPRTSFQKDFLDDYKKP.

The protein belongs to the DNA polymerase type-Y family. Monomer. Mg(2+) is required as a cofactor.

The protein localises to the cytoplasm. It catalyses the reaction DNA(n) + a 2'-deoxyribonucleoside 5'-triphosphate = DNA(n+1) + diphosphate. In terms of biological role, poorly processive, error-prone DNA polymerase involved in untargeted mutagenesis. Copies undamaged DNA at stalled replication forks, which arise in vivo from mismatched or misaligned primer ends. These misaligned primers can be extended by PolIV. Exhibits no 3'-5' exonuclease (proofreading) activity. May be involved in translesional synthesis, in conjunction with the beta clamp from PolIII. This is DNA polymerase IV from Oceanobacillus iheyensis (strain DSM 14371 / CIP 107618 / JCM 11309 / KCTC 3954 / HTE831).